Here is a 311-residue protein sequence, read N- to C-terminus: Quinolinate synthase (311 aa).

2 residues coordinate iminosuccinate: His25 and Ser42. Cys87 is a [4Fe-4S] cluster binding site. Iminosuccinate is bound by residues 113–115 and Ser130; that span reads YIN. Position 175 (Cys175) interacts with [4Fe-4S] cluster. Iminosuccinate is bound by residues 201–203 and Thr218; that span reads HPE. Cys268 lines the [4Fe-4S] cluster pocket.

The protein belongs to the quinolinate synthase family. Type 2 subfamily. [4Fe-4S] cluster is required as a cofactor.

The protein localises to the cytoplasm. It catalyses the reaction iminosuccinate + dihydroxyacetone phosphate = quinolinate + phosphate + 2 H2O + H(+). It participates in cofactor biosynthesis; NAD(+) biosynthesis; quinolinate from iminoaspartate: step 1/1. Catalyzes the condensation of iminoaspartate with dihydroxyacetone phosphate to form quinolinate. The chain is Quinolinate synthase from Saccharolobus solfataricus (strain ATCC 35092 / DSM 1617 / JCM 11322 / P2) (Sulfolobus solfataricus).